We begin with the raw amino-acid sequence, 984 residues long: Ephrin type-A receptor 3 (984 aa).

Residues 1-20 (MDCHLSILILFGCCVLSCSR) form the signal peptide. The Extracellular segment spans residues 21–541 (ELSPQPSNEV…SFSISGENSH (521 aa)). The Eph LBD domain occupies 29–207 (EVNLLDSKTI…YFKKCPFTVK (179 aa)). Asn232, Asn337, Asn391, Asn404, and Asn493 each carry an N-linked (GlcNAc...) asparagine glycan. Fibronectin type-III domains follow at residues 325–435 (PPSA…TNQA) and 436–532 (APSP…SPDS). Residues 542–565 (VVMIAISAAVAIIVLTVVTYVLVG) form a helical membrane-spanning segment. Residues 566-984 (RFCGYHKSKH…TQSKNGPVPV (419 aa)) lie on the Cytoplasmic side of the membrane. Residues Tyr597 and Tyr603 each carry the phosphotyrosine; by autocatalysis modification. The Protein kinase domain maps to 622 to 883 (IAIDKVVGAG…QIVSILDKLI (262 aa)). ATP contacts are provided by residues 629-634 (GAGEFG), Lys654, and 701-707 (EYMENGS). The residue at position 702 (Tyr702) is a Phosphotyrosine; by autocatalysis. Catalysis depends on Asp747, which acts as the Proton acceptor. 751–752 (RN) lines the ATP pocket. Tyr780 carries the post-translational modification Phosphotyrosine; by autocatalysis. The 65-residue stretch at 912–976 (ATFHTTGDWL…ISSIKALETQ (65 aa)) folds into the SAM domain. Phosphotyrosine is present on Tyr938. The PDZ-binding motif lies at 982-984 (VPV).

It belongs to the protein kinase superfamily. Tyr protein kinase family. Ephrin receptor subfamily. As to quaternary structure, heterotetramer upon binding of the ligand. The heterotetramer is composed of an ephrin dimer and a receptor dimer. Oligomerization is probably required to induce biological responses. Forms a ternary EFNA5-EPHA3-ADAM10 complex mediating EFNA5 extracellular domain shedding by ADAM10 which regulates the EFNA5-EPHA3 complex internalization and function. Interacts (phosphorylated) with PTPN1; dephosphorylates EPHA3 and may regulate its trafficking and function. Interacts (phosphorylated) with CRK; mediates EFNA5-EPHA3 signaling through RHOA GTPase activation. Interacts with NCK1 (via SH2 domain); mediates EFNA5-EPHA3 signaling. Post-translationally, autophosphorylates upon activation by EFNA5. Phosphorylation on Tyr-603 mediates interaction with NCK1. Dephosphorylated by PTPN1. Most abundant in the heart, brain and lung.

It localises to the cell membrane. The catalysed reaction is L-tyrosyl-[protein] + ATP = O-phospho-L-tyrosyl-[protein] + ADP + H(+). Receptor tyrosine kinase which binds promiscuously membrane-bound ephrin family ligands residing on adjacent cells, leading to contact-dependent bidirectional signaling into neighboring cells. The signaling pathway downstream of the receptor is referred to as forward signaling while the signaling pathway downstream of the ephrin ligand is referred to as reverse signaling. Highly promiscuous for ephrin-A ligands it binds preferentially EFNA5. Upon activation by EFNA5 regulates cell-cell adhesion, cytoskeletal organization and cell migration. Plays a role in cardiac cells migration and differentiation and regulates the formation of the atrioventricular canal and septum during development probably through activation by EFNA1. Involved in the retinotectal mapping of neurons. May also control the segregation but not the guidance of motor and sensory axons during neuromuscular circuit development. The protein is Ephrin type-A receptor 3 (Epha3) of Rattus norvegicus (Rat).